Reading from the N-terminus, the 274-residue chain is Proto-oncogene FRAT1 (274 aa).

4 disordered regions span residues 1-24 (MPCR…DDSF), 55-107 (AHDR…PGAV), 132-194 (GASA…DDPH), and 232-274 (GPLS…VPGS). Residues 7 to 23 (EEEEAGDEAEGEEDDDS) are compositionally biased toward acidic residues. Residues 191-214 (DDPHRLLQQLVLSGNLIKEAVRRL) are involved in GSK-3 binding. A phosphoserine mark is found at S243 and S246.

This sequence belongs to the GSK-3-binding protein family. Binds DVL1. Binds GSK-3 and prevent GSK-3-dependent phosphorylation. In terms of processing, phosphorylated. As to expression, highly expressed in testis. Lower level of expression in spleen, thymus and brain.

Its subcellular location is the cytoplasm. Functionally, positively regulates the Wnt signaling pathway by stabilizing beta-catenin through the association with GSK-3. May play a role in tumor progression and collaborate with PIM1 and MYC in lymphomagenesis. This Mus musculus (Mouse) protein is Proto-oncogene FRAT1 (Frat1).